A 277-amino-acid chain; its full sequence is R-spondin-3 (277 aa).

The N-terminal stretch at 1–21 (MHLRLISCFFIILNFMEYIGS) is a signal peptide. 2 FU repeats span residues 35-86 (PNVS…GYYG) and 92-135 (INKC…GLEA). N-linked (GlcNAc...) asparagine glycosylation is present at Asn-36. Disulfide bonds link Cys-41–Cys-48, Cys-45–Cys-54, Cys-57–Cys-76, Cys-80–Cys-95, Cys-98–Cys-105, Cys-102–Cys-111, Cys-114–Cys-125, Cys-129–Cys-142, Cys-148–Cys-190, Cys-159–Cys-166, and Cys-199–Cys-206. A TSP type-1 domain is found at 147 to 207 (HCEASEWSPW…TCIVQRKKCS (61 aa)). The interval 210 to 277 (ERGKKGRERK…QKSVSVSTVH (68 aa)) is disordered. Basic residues predominate over residues 213 to 223 (KKGRERKRKKL). Low complexity predominate over residues 232-245 (SSSSDSKGLESSIE).

It belongs to the R-spondin family. In terms of assembly, interacts with the extracellular domain of FZD8 and LRP6. It however does not form a ternary complex with FZD8 and LRP6. Interacts with WNT1. Binds heparin. Interacts with LGR4, LGR5 and LGR6. Highly expressed in endothelial cells.

It localises to the secreted. In terms of biological role, activator of the canonical Wnt signaling pathway by acting as a ligand for LGR4-6 receptors, which acts as a key regulator of angiogenesis. Upon binding to LGR4-6 (LGR4, LGR5 or LGR6), LGR4-6 associate with phosphorylated LRP6 and frizzled receptors that are activated by extracellular Wnt receptors, triggering the canonical Wnt signaling pathway to increase expression of target genes. Also regulates the canonical Wnt/beta-catenin-dependent pathway and non-canonical Wnt signaling by acting as an inhibitor of ZNRF3, an important regulator of the Wnt signaling pathway. Acts as a ligand for frizzled FZD8 and LRP6. May negatively regulate the TGF-beta pathway. Acts as a key regulator of angiogenesis by controlling vascular stability and pruning: acts by activating the non-canonical Wnt signaling pathway in endothelial cells. Can also amplify Wnt signaling pathway independently of LGR4-6 receptors, possibly by acting as a direct antagonistic ligand to RNF43 and ZNRF3. The polypeptide is R-spondin-3 (Rspo3) (Mus musculus (Mouse)).